The primary structure comprises 319 residues: tRNA uridine(34) hydroxylase (319 aa).

The region spanning 127 to 221 is the Rhodanese domain; it reads KQEDTVIIDA…YGKDPEVQGE (95 aa). Cysteine 181 serves as the catalytic Cysteine persulfide intermediate.

This sequence belongs to the TrhO family.

It catalyses the reaction uridine(34) in tRNA + AH2 + O2 = 5-hydroxyuridine(34) in tRNA + A + H2O. Functionally, catalyzes oxygen-dependent 5-hydroxyuridine (ho5U) modification at position 34 in tRNAs. This chain is tRNA uridine(34) hydroxylase, found in Bacillus thuringiensis (strain Al Hakam).